The chain runs to 1530 residues: Coiled-coil domain-containing protein 141 (1530 aa).

Threonine 91 carries the post-translational modification Phosphothreonine. Coiled-coil stretches lie at residues 642–706 (VKNE…EALM), 758–783 (VKEK…QDYE), and 861–970 (SNVS…KTSD). The interval 1210–1241 (SPDDISLPPLPGSPESPLAPSDMEVEEPVSSS) is disordered. The Ig-like domain maps to 1409 to 1530 (PNFSRLLSNV…VSLMYWLLTQ (122 aa)).

As to quaternary structure, interacts with DISC1. Interacts preferentially with phosphorylated forms of myosin regulatory light chain (MRLC). Interacts (via the N-terminal region) with HDAC6; inhibits the deacetylase activity of HDAC6. Interacts with KIBRA (via the C-terminal region); retains AMPAR in the cytosol after internalization. Post-translationally, ubiquitinated and degradated by the CDC20-APC/C pathway. During brain development, CDC20-APC/C complex degrades CCDC141 after centrosome translocation into the dilated area. CCDC141 is restabilized in the dilation until the centrosome enters the dilation, at which point it is once again immediately destabilized by CDC20-APC/C complex. The oscillatory regulation of CCDC141 protein is needed for proper cortical migration. In terms of processing, phosphorylation at Thr-91 by PLK1 affects CCDC141 degradation.

It localises to the cytoplasm. The protein localises to the cytoskeleton. Its subcellular location is the microtubule organizing center. The protein resides in the centrosome. Functionally, plays a critical role in cortical radial and GnRH neurons migration during brain development. Regulates cortical radial migration by negatively controlling the activity of histone deacetylase 6 (HDAC6) and promotes centrosome maturation. CAMDI is required for dilation formation of cortical neurons during radial migration. Plays a critical role in learning and memory performance through regulation of AMPA-selective glutamate receptors (AMPARs) cell surface expression in competition with KIBRA. In Homo sapiens (Human), this protein is Coiled-coil domain-containing protein 141 (CCDC141).